The sequence spans 242 residues: Large ribosomal subunit protein uL3 (242 aa).

Positions Gly131–His165 are disordered. The span at His135–Arg150 shows a compositional bias: polar residues. N5-methylglutamine is present on Gln151.

The protein belongs to the universal ribosomal protein uL3 family. As to quaternary structure, part of the 50S ribosomal subunit. Forms a cluster with proteins L14 and L19. In terms of processing, methylated by PrmB.

In terms of biological role, one of the primary rRNA binding proteins, it binds directly near the 3'-end of the 23S rRNA, where it nucleates assembly of the 50S subunit. In Chelativorans sp. (strain BNC1), this protein is Large ribosomal subunit protein uL3.